A 356-amino-acid chain; its full sequence is Pyrimidine monooxygenase RutA (356 aa).

FMN contacts are provided by residues 49–50, Asn-115, Glu-124, 140–141, and Ser-190; these read IK and RY.

This sequence belongs to the NtaA/SnaA/DszA monooxygenase family. RutA subfamily.

It carries out the reaction uracil + FMNH2 + NADH + O2 = (Z)-3-ureidoacrylate + FMN + NAD(+) + H2O + H(+). It catalyses the reaction thymine + FMNH2 + NADH + O2 = (Z)-2-methylureidoacrylate + FMN + NAD(+) + H2O + H(+). Its function is as follows. Catalyzes the pyrimidine ring opening between N-3 and C-4 by an unusual flavin hydroperoxide-catalyzed mechanism, adding oxygen atoms in the process to yield ureidoacrylate peracid, that immediately reacts with FMN forming ureidoacrylate and FMN-N(5)-oxide. The FMN-N(5)-oxide reacts spontaneously with NADH to produce FMN. Requires the flavin reductase RutF to regenerate FMN in vivo. In Haliangium ochraceum (strain DSM 14365 / JCM 11303 / SMP-2), this protein is Pyrimidine monooxygenase RutA.